A 637-amino-acid chain; its full sequence is Sodium-dependent phosphate transport protein 2A (637 aa).

Over 1-103 (MMSYSERLGG…LAQVGTKLLK (103 aa)) the chain is Cytoplasmic. Phosphoserine is present on residues Ser-14 and Ser-34. The chain crosses the membrane as a helical span at residues 104–125 (VPLMLGFLYLFVCSLDVLSSAF). Over 126 to 145 (QLAGGKVAGDIFKDNAILSN) the chain is Extracellular. Residues 146–163 (PVAGLVVGILVTVLVQSS) traverse the membrane as a helical segment. Residues 164-216 (STSTSIIVSMVSSGLLEVSSAIPIIMGSNIGTSVTNTIVALMQAGDRTDFRRA) lie on the Cytoplasmic side of the membrane. Residues 217-236 (FAGATVHDCFNWLSVLVLLP) form a helical membrane-spanning segment. Disulfide bonds link Cys-225-Cys-520 and Cys-306-Cys-334. Over 237-345 (LEAATGYLHH…HIFVDTGLPD (109 aa)) the chain is Extracellular. N-linked (GlcNAc...) asparagine glycosylation is found at Asn-298 and Asn-328. A helical membrane pass occupies residues 346–368 (LAVGLILLAGSLVVLCTCLILLV). The Cytoplasmic segment spans residues 369–410 (KMLNSLLKGQVANVIQKVINTDFPAPFTWVTGYFAMVVGASM). The helical transmembrane segment at 411–434 (TFVVQSSSVFTSAITPLIGLGVIS) threads the bilayer. Topologically, residues 435-464 (IERAYPLTLGSNIGTTTTAILAALASPREK) are extracellular. A helical transmembrane segment spans residues 465–485 (LSSSFQIALCHFFFNISGILL). Residues 486 to 511 (WYPLPCTRLPIRMAKALGKRTAKYRW) lie on the Cytoplasmic side of the membrane. The residue at position 506 (Thr-506) is a Phosphothreonine; by PKC. A helical transmembrane segment spans residues 512 to 532 (FAVLYLLVCFLLLPSLVFGIS). Topologically, residues 533 to 537 (MAGWQ) are extracellular. The helical transmembrane segment at 538–559 (AMVGVGTPFGALLAFVVLVNVL) threads the bilayer. Over 560-637 (QSRSPGHLPK…LPAHHNATRL (78 aa)) the chain is Cytoplasmic. Ser-605 is subject to Phosphoserine. Position 621 is a phosphothreonine (Thr-621). Ser-623 is modified (phosphoserine).

The protein belongs to the SLC34A transporter family. In terms of assembly, interacts via its C-terminal region with NHERF4. Interacts with NHERF1. Interacts with TMEM174; regulates SLC34A1 internalization by PTH and FGF23. As to expression, kidney.

It localises to the apical cell membrane. The protein localises to the cell membrane. The enzyme catalyses 3 Na(+)(out) + phosphate(out) = 3 Na(+)(in) + phosphate(in). With respect to regulation, transport activity is significantly increased in response to dietary phosphate deprivation. In terms of biological role, involved in actively transporting phosphate into cells via Na(+) cotransport in the renal brush border membrane. The cotransport has a Na(+):Pi stoichiometry of 3:1 and is electrogenic. This Rattus norvegicus (Rat) protein is Sodium-dependent phosphate transport protein 2A.